The sequence spans 234 residues: Isoprenyl transferase (234 aa).

Asp-13 is a catalytic residue. Asp-13 is a Mg(2+) binding site. Substrate contacts are provided by residues 14-17 (GNGR), Trp-18, Arg-26, His-30, and 58-60 (STE). Residue Asn-61 is the Proton acceptor of the active site. Substrate is bound by residues Trp-62, Arg-64, Arg-180, and 186–188 (RLS). Glu-199 contacts Mg(2+).

It belongs to the UPP synthase family. As to quaternary structure, homodimer. The cofactor is Mg(2+).

Functionally, catalyzes the condensation of isopentenyl diphosphate (IPP) with allylic pyrophosphates generating different type of terpenoids. The sequence is that of Isoprenyl transferase from Helicobacter pylori (strain J99 / ATCC 700824) (Campylobacter pylori J99).